The primary structure comprises 255 residues: Malonyl-[acyl-carrier protein] O-methyltransferase (255 aa).

This sequence belongs to the methyltransferase superfamily.

It catalyses the reaction malonyl-[ACP] + S-adenosyl-L-methionine = malonyl-[ACP] methyl ester + S-adenosyl-L-homocysteine. It functions in the pathway cofactor biosynthesis; biotin biosynthesis. In terms of biological role, converts the free carboxyl group of a malonyl-thioester to its methyl ester by transfer of a methyl group from S-adenosyl-L-methionine (SAM). It allows to synthesize pimeloyl-ACP via the fatty acid synthetic pathway. The polypeptide is Malonyl-[acyl-carrier protein] O-methyltransferase (Acinetobacter baylyi (strain ATCC 33305 / BD413 / ADP1)).